Consider the following 468-residue polypeptide: MPREIINLQVGQCGNQVGSEFWRKLCQEHGIAKDGRLEDFATLGGDRKDVFFYQADDEQYIPRAILLDLEPRVINGIQTSDLRNLFNPENIFISKEGGGAGNNWASGYTQGEAVQETLLDMIDREAEYCDSLEGFNMCHSIAGGTGSGMGSYMLELISDRYSKKLIQTYSVFPNQSESSDVVVQPYNSLLTLKRLTLHADAVVVLDNTALDKIAVERLHLHKPDVQQINSLIATVMAASTTTLRYPGYMNNDLVGLVASLIPTPRCHFLMTGYTPLTAENAAGQVTSNIRKTTVLDVMRRLLQPKNIMVSTHTKSRDIANAKYISILNIIQGEVDPSQVHKSLQRIRERKQANFIEWGPASIQVALSKKSPYVQTAHRVSGLMLANHTSVRHLFNKVLRDYEKLMGPKQERQAFMQAYRDVPRFADAAGGGTALLEEFADAKEVVQDLANEYAACESADYIQRQMMAS.

A142 to G148 is a binding site for GTP.

This sequence belongs to the tubulin family.

It is found in the cytoplasm. Its subcellular location is the cytoskeleton. The protein localises to the microtubule organizing center. Functionally, tubulin is the major constituent of microtubules. The gamma chain is found at microtubule organizing centers (MTOC) such as the spindle poles, suggesting that it is involved in the minus-end nucleation of microtubule assembly. The protein is Tubulin gamma chain (TUBG) of Chlamydomonas reinhardtii (Chlamydomonas smithii).